We begin with the raw amino-acid sequence, 315 residues long: MEPGAWGNRTAVTDFILLGLTGNVRLQPILFVVFFFAYIVTVGGNLSILAAIFVEPKLHTPMYYFLGNLSLLDIGCISVTVPPMLVCLLAHECRVPYAACISQLFFFHLLAGVDCHLLTAMAYDRYLAICQPLTYSTRMSREVQGTLVGICCTVSFINALTHTVAVSVLDFCGPNVVNHFYCDLPPLFQLSCSSIYLNGQLLFVGATFMGVVPMILISVSYAHVAAAVLRIRSTEGRKKAFSTCGSHLTVVCIFYGTGFFSYMRLGSVSASDKDKGIGILNTILSPMLNPLIYSLRNPDVQGALKRVLTGKRYPV.

Over 1 to 28 the chain is Extracellular; it reads MEPGAWGNRTAVTDFILLGLTGNVRLQP. Asparagine 8 carries an N-linked (GlcNAc...) asparagine glycan. Residues 29-49 traverse the membrane as a helical segment; that stretch reads ILFVVFFFAYIVTVGGNLSIL. Residues 50-68 are Cytoplasmic-facing; the sequence is AAIFVEPKLHTPMYYFLGN. The helical transmembrane segment at 69–89 threads the bilayer; the sequence is LSLLDIGCISVTVPPMLVCLL. The Extracellular segment spans residues 90 to 97; sequence AHECRVPY. A helical transmembrane segment spans residues 98-118; sequence AACISQLFFFHLLAGVDCHLL. Residues cysteine 100 and cysteine 192 are joined by a disulfide bond. At 119–145 the chain is on the cytoplasmic side; that stretch reads TAMAYDRYLAICQPLTYSTRMSREVQG. The helical transmembrane segment at 146–166 threads the bilayer; that stretch reads TLVGICCTVSFINALTHTVAV. Residues 167–200 lie on the Extracellular side of the membrane; the sequence is SVLDFCGPNVVNHFYCDLPPLFQLSCSSIYLNGQ. The chain crosses the membrane as a helical span at residues 201–221; sequence LLFVGATFMGVVPMILISVSY. Topologically, residues 222–239 are cytoplasmic; it reads AHVAAAVLRIRSTEGRKK. Residues 240–260 form a helical membrane-spanning segment; that stretch reads AFSTCGSHLTVVCIFYGTGFF. The Extracellular portion of the chain corresponds to 261 to 274; sequence SYMRLGSVSASDKD. The helical transmembrane segment at 275-295 threads the bilayer; sequence KGIGILNTILSPMLNPLIYSL. Residues 296 to 315 are Cytoplasmic-facing; that stretch reads RNPDVQGALKRVLTGKRYPV.

The protein belongs to the G-protein coupled receptor 1 family.

It localises to the cell membrane. In terms of biological role, odorant receptor. This is Olfactory receptor 3A10 from Mus musculus (Mouse).